The primary structure comprises 71 residues: Prokaryotic ubiquitin-like protein Pup (71 aa).

A compositionally biased stretch (low complexity) spans 1–18 (MATRDSGGQSQTGRSQQG). Residues 1-42 (MATRDSGGQSQTGRSQQGEEIEDVTTEASAEAAERHAEITED) are disordered. Residues 27–65 (EASAEAAERHAEITEDVDDLLDEIDSVLEENAEEFVRGY) form an ARC ATPase binding region. Residues 29–60 (SAEAAERHAEITEDVDDLLDEIDSVLEENAEE) are a coiled coil. E71 is covalently cross-linked (Isoglutamyl lysine isopeptide (Glu-Lys) (interchain with K-? in acceptor proteins)).

This sequence belongs to the prokaryotic ubiquitin-like protein family. As to quaternary structure, strongly interacts with the proteasome-associated ATPase ARC through a hydrophobic interface; the interacting region of Pup lies in its C-terminal half. There is one Pup binding site per ARC hexamer ring.

It functions in the pathway protein degradation; proteasomal Pup-dependent pathway. In terms of biological role, protein modifier that is covalently attached to lysine residues of substrate proteins, thereby targeting them for proteasomal degradation. The tagging system is termed pupylation. The protein is Prokaryotic ubiquitin-like protein Pup of Salinispora tropica (strain ATCC BAA-916 / DSM 44818 / JCM 13857 / NBRC 105044 / CNB-440).